The primary structure comprises 385 residues: GPN-loop GTPase 1 (385 aa).

13 to 18 (GSGKTT) contacts GTP. The Gly-Pro-Asn (GPN)-loop; involved in dimer interface motif lies at 70-72 (GPN). GTP is bound at residue 173–176 (NKTD). A phosphoserine mark is found at Ser304, Ser308, and Ser313. The span at 317–332 (EDANDGLVDRDEDEGV) shows a compositional bias: acidic residues. A disordered region spans residues 317 to 356 (EDANDGLVDRDEDEGVEREYTFPGEERTKGEVNENSAPDL). Positions 333–348 (EREYTFPGEERTKGEV) are enriched in basic and acidic residues. At Ser352 the chain carries Phosphoserine. A Glycyl lysine isopeptide (Lys-Gly) (interchain with G-Cter in ubiquitin) cross-link involves residue Lys369.

The protein belongs to the GPN-loop GTPase family. In terms of assembly, heterodimers with GPN2 or GPN3. Binds to RNA polymerase II (RNAPII) in a GTP-dependent manner. Interacts with nuclear pore protein NUP133 and nuclear export factor CRM1. Interacts with PCL1. Phosphorylated by the cyclin-CDK PCL1-PHO85.

The protein resides in the cytoplasm. Functionally, small GTPase required for proper nuclear import of RNA polymerase II (RNAPII). May act at an RNAP assembly step prior to nuclear import. Promotes sister chromatid separation during anaphase. The chain is GPN-loop GTPase 1 from Saccharomyces cerevisiae (strain ATCC 204508 / S288c) (Baker's yeast).